Reading from the N-terminus, the 182-residue chain is Ribulose bisphosphate carboxylase small subunit, chloroplastic 5 (182 aa).

Residues 1 to 49 (MASSLMSNAATTMAAATTTAQANMVAPFNGLKSISAFPVTRKNNDITSV) constitute a chloroplast transit peptide.

This sequence belongs to the RuBisCO small chain family. In terms of assembly, heterohexadecamer of 8 large and 8 small subunits.

It localises to the plastid. The protein resides in the chloroplast. Its function is as follows. RuBisCO catalyzes two reactions: the carboxylation of D-ribulose 1,5-bisphosphate, the primary event in carbon dioxide fixation, as well as the oxidative fragmentation of the pentose substrate. Both reactions occur simultaneously and in competition at the same active site. Although the small subunit is not catalytic it is essential for maximal activity. The sequence is that of Ribulose bisphosphate carboxylase small subunit, chloroplastic 5 from Mesembryanthemum crystallinum (Common ice plant).